Here is a 239-residue protein sequence, read N- to C-terminus: tRNA (guanine-N(7)-)-methyltransferase (239 aa).

S-adenosyl-L-methionine-binding residues include Glu69, Glu94, Asp121, and Asp144. Asp144 is a catalytic residue. Residue Lys148 coordinates substrate. The tract at residues 150-155 (RHNKRR) is interaction with RNA. Substrate is bound by residues Asp180 and 217–220 (TKFE).

The protein belongs to the class I-like SAM-binding methyltransferase superfamily. TrmB family. As to quaternary structure, monomer.

The enzyme catalyses guanosine(46) in tRNA + S-adenosyl-L-methionine = N(7)-methylguanosine(46) in tRNA + S-adenosyl-L-homocysteine. It functions in the pathway tRNA modification; N(7)-methylguanine-tRNA biosynthesis. Catalyzes the formation of N(7)-methylguanine at position 46 (m7G46) in tRNA. The chain is tRNA (guanine-N(7)-)-methyltransferase from Escherichia coli O6:H1 (strain CFT073 / ATCC 700928 / UPEC).